We begin with the raw amino-acid sequence, 359 residues long: tRNA N6-adenosine threonylcarbamoyltransferase (359 aa).

Fe cation is bound by residues H115 and H119. Substrate contacts are provided by residues 137-141 (LVSGG), D170, G183, and N283. D311 provides a ligand contact to Fe cation. The segment at 328–359 (APDSLDLAPRSRWPLDEKSAPLIGTGRRGAKA) is disordered.

The protein belongs to the KAE1 / TsaD family. The cofactor is Fe(2+).

The protein localises to the cytoplasm. It catalyses the reaction L-threonylcarbamoyladenylate + adenosine(37) in tRNA = N(6)-L-threonylcarbamoyladenosine(37) in tRNA + AMP + H(+). In terms of biological role, required for the formation of a threonylcarbamoyl group on adenosine at position 37 (t(6)A37) in tRNAs that read codons beginning with adenine. Is involved in the transfer of the threonylcarbamoyl moiety of threonylcarbamoyl-AMP (TC-AMP) to the N6 group of A37, together with TsaE and TsaB. TsaD likely plays a direct catalytic role in this reaction. In Brucella anthropi (strain ATCC 49188 / DSM 6882 / CCUG 24695 / JCM 21032 / LMG 3331 / NBRC 15819 / NCTC 12168 / Alc 37) (Ochrobactrum anthropi), this protein is tRNA N6-adenosine threonylcarbamoyltransferase.